Here is a 510-residue protein sequence, read N- to C-terminus: Anaerobic nitric oxide reductase transcription regulator NorR (510 aa).

The 230-residue stretch at 188 to 417 (IIGNSQGMRT…LEHVIKRAAV (230 aa)) folds into the Sigma-54 factor interaction domain. Residues 216 to 223 (GETGVGKE) and 279 to 288 (ADGGTLFLDE) each bind ATP. The segment at residues 486–505 (WAATARQLELDSGNLHRLAK) is a DNA-binding region (H-T-H motif).

It functions in the pathway nitrogen metabolism; nitric oxide reduction. Functionally, required for the expression of anaerobic nitric oxide (NO) reductase, acts as a transcriptional activator for at least the norVW operon. Activation also requires sigma-54. This is Anaerobic nitric oxide reductase transcription regulator NorR from Vibrio vulnificus (strain CMCP6).